The sequence spans 545 residues: Sulfite oxidase, mitochondrial (545 aa).

The transit peptide at 1–79 directs the protein to the mitochondrion; the sequence is MLLLHRAVVL…YQDHRCRAAQ (79 aa). Positions 82 to 161 constitute a Cytochrome b5 heme-binding domain; sequence TRIYTKEEVS…LAQYKVGELN (80 aa). H118 contacts heme b. A Phosphoserine modification is found at S123. Heme b is bound by residues H143, Q145, and H147. The interval 165 to 174 is hinge; that stretch reads KVAPTVETSD. The segment at 175 to 401 is moco domain; that stretch reads PYADDPVRHP…YSHWQRRDYK (227 aa). Residues 215 to 219, C264, D322, H361, R366, and 377 to 379 each bind Mo-molybdopterin; these read FTRNH and HVK. The homodimerization stretch occupies residues 402-538; the sequence is GFSPSVDWDT…RGVLSNAWHR (137 aa).

As to quaternary structure, homodimer. Heme b serves as cofactor. Mo-molybdopterin is required as a cofactor.

The protein localises to the mitochondrion intermembrane space. It carries out the reaction sulfite + O2 + H2O = sulfate + H2O2. It functions in the pathway energy metabolism; sulfur metabolism. Functionally, catalyzes the oxidation of sulfite to sulfate, the terminal reaction in the oxidative degradation of sulfur-containing amino acids. This is Sulfite oxidase, mitochondrial (SUOX) from Macaca fascicularis (Crab-eating macaque).